The sequence spans 829 residues: Periplasmic nitrate reductase (829 aa).

The tat-type signal signal peptide spans 1-31; that stretch reads MKLSRRDFMKANAVAAAAAAAGLTIPTVARA. A 4Fe-4S Mo/W bis-MGD-type domain is found at 40–96; it reads ITWDKAPCRFCGTGCGVLVGTQNGRIVASQGDPDAPVNRGLNCIKGYFLPKIMYGKD. [4Fe-4S] cluster-binding residues include Cys47, Cys50, Cys54, and Cys82. Mo-bis(molybdopterin guanine dinucleotide) is bound by residues Lys84, Gln151, Asn176, Cys180, 213–220, 263–265, Met373, Gln377, Asn483, 509–510, Lys532, Asp559, and 719–728; these read WGSNMAEM, QSD, SD, and TGRVLEHWHT. Phe795 contributes to the substrate binding site. Residues Asn803 and Lys820 each contribute to the Mo-bis(molybdopterin guanine dinucleotide) site.

This sequence belongs to the prokaryotic molybdopterin-containing oxidoreductase family. NasA/NapA/NarB subfamily. As to quaternary structure, component of the periplasmic nitrate reductase NapAB complex composed of NapA and NapB. [4Fe-4S] cluster is required as a cofactor. The cofactor is Mo-bis(molybdopterin guanine dinucleotide). Post-translationally, predicted to be exported by the Tat system. The position of the signal peptide cleavage has not been experimentally proven.

Its subcellular location is the periplasm. The enzyme catalyses 2 Fe(II)-[cytochrome] + nitrate + 2 H(+) = 2 Fe(III)-[cytochrome] + nitrite + H2O. Catalytic subunit of the periplasmic nitrate reductase complex NapAB. Receives electrons from NapB and catalyzes the reduction of nitrate to nitrite. In Edwardsiella ictaluri (strain 93-146), this protein is Periplasmic nitrate reductase.